The primary structure comprises 384 residues: NAD(P) transhydrogenase subunit alpha part 1 (384 aa).

The segment at Pro126–Ile136 is RQD loop; involved in interaction with PntB. NAD(+)-binding positions include Arg127–Ser129, Gln132–Asp135, Val180–Val182, Asp202–Arg204, Gly234, Gln247, and Leu266.

Belongs to the AlaDH/PNT family. In terms of assembly, heterotrimer of two alpha chains and a beta (PntB) chain; in Rhodospirillum, the alpha chain is made of two subunits (PntAA and PntAB) and forms a dimer.

The catalysed reaction is NAD(+) + NADPH + H(+)(in) = NADH + NADP(+) + H(+)(out). The transhydrogenation between NADH and NADP is coupled to respiration and ATP hydrolysis and functions as a proton pump across the membrane. The protein is NAD(P) transhydrogenase subunit alpha part 1 (pntAA) of Rhodospirillum rubrum (strain ATCC 11170 / ATH 1.1.1 / DSM 467 / LMG 4362 / NCIMB 8255 / S1).